Consider the following 223-residue polypeptide: Acetate CoA-transferase subunit beta (223 aa).

The active site involves glutamate 46.

It belongs to the 3-oxoacid CoA-transferase subunit B family. As to quaternary structure, heterotetramer composed of two alpha subunits (AtoD) and two beta subunits (AtoA).

The enzyme catalyses an acyl-CoA + acetate = a carboxylate + acetyl-CoA. It carries out the reaction acetoacetate + acetyl-CoA = acetoacetyl-CoA + acetate. It functions in the pathway lipid metabolism; short-chain fatty acid metabolism. Coenzyme A transferase which is involved in short-chain fatty acid degradation and catalyzes the activation of short-chain fatty acids to their respective CoA thiolesters. This is Acetate CoA-transferase subunit beta (atoA) from Haemophilus influenzae (strain ATCC 51907 / DSM 11121 / KW20 / Rd).